The chain runs to 356 residues: Cyanuric acid amidohydrolase (356 aa).

An RU A region spans residues 1–99; that stretch reads MPIAKVHRIA…FLVFERAEGN (99 aa). Substrate contacts are provided by residues Arg-52 and 79-80; that span reads SG. Residues 106-243 are RU B; the sequence is ALAIGRAHTP…HEIVVLGMSE (138 aa). The active site involves Lys-156. Substrate is bound by residues Arg-188 and 226-227; that span reads SS. Ser-226 (nucleophile) is an active-site residue. An RU C region spans residues 249–356; sequence LAIAHGVMAD…VAVIAARTMG (108 aa). Glu-287 contributes to the Mg(2+) binding site. Residues Arg-314 and 333–334 contribute to the substrate site; that span reads SG. 5 residues coordinate Mg(2+): Gly-336, Gln-339, Gly-340, Pro-341, and Gly-344.

It belongs to the cyclic amide hydrolase (CyAH) family. In terms of assembly, homotetramer.

The enzyme catalyses cyanurate + H2O = 1-carboxybiuret + H(+). It functions in the pathway xenobiotic degradation; atrazine degradation; biuret from cyanurate: step 1/1. With respect to regulation, inhibited by barbituric acid. Functionally, responsible for the hydrolysis of cyanuric acid, an intermediate formed during catabolism of s-triazine based compounds in herbicides such as atrazine and polymers such as melamine. Catalyzes the hydrolytic opening of the s-triazine ring of cyanuric acid (2,4,6-trihydroxy-s-triazine) to yield carbon dioxide and carboxybiuret, which spontaneously decarboxylates to biuret. The protein is Cyanuric acid amidohydrolase of Azorhizobium caulinodans (strain ATCC 43989 / DSM 5975 / JCM 20966 / LMG 6465 / NBRC 14845 / NCIMB 13405 / ORS 571).